A 158-amino-acid polypeptide reads, in one-letter code: Protein Smg homolog (158 aa).

This sequence belongs to the Smg family.

The protein is Protein Smg homolog of Herminiimonas arsenicoxydans.